The sequence spans 417 residues: UDP-N-acetylglucosamine 1-carboxyvinyltransferase (417 aa).

Lys22–Asn23 is a binding site for phosphoenolpyruvate. Residue Arg93 participates in UDP-N-acetyl-alpha-D-glucosamine binding. Cys117 serves as the catalytic Proton donor. Cys117 is modified (2-(S-cysteinyl)pyruvic acid O-phosphothioketal). UDP-N-acetyl-alpha-D-glucosamine contacts are provided by residues Arg122–Leu126, Asp305, and Ile327.

It belongs to the EPSP synthase family. MurA subfamily.

It is found in the cytoplasm. The enzyme catalyses phosphoenolpyruvate + UDP-N-acetyl-alpha-D-glucosamine = UDP-N-acetyl-3-O-(1-carboxyvinyl)-alpha-D-glucosamine + phosphate. It participates in cell wall biogenesis; peptidoglycan biosynthesis. Cell wall formation. Adds enolpyruvyl to UDP-N-acetylglucosamine. The chain is UDP-N-acetylglucosamine 1-carboxyvinyltransferase from Thiobacillus denitrificans (strain ATCC 25259 / T1).